The chain runs to 219 residues: Ribose-5-phosphate isomerase A (219 aa).

Substrate is bound by residues 28–31 (SGST), 81–84 (DGAD), and 94–97 (KGGG). Glu-103 functions as the Proton acceptor in the catalytic mechanism. A substrate-binding site is contributed by Lys-121.

Belongs to the ribose 5-phosphate isomerase family. In terms of assembly, homodimer.

The enzyme catalyses aldehydo-D-ribose 5-phosphate = D-ribulose 5-phosphate. It functions in the pathway carbohydrate degradation; pentose phosphate pathway; D-ribose 5-phosphate from D-ribulose 5-phosphate (non-oxidative stage): step 1/1. Catalyzes the reversible conversion of ribose-5-phosphate to ribulose 5-phosphate. The protein is Ribose-5-phosphate isomerase A of Actinobacillus pleuropneumoniae serotype 3 (strain JL03).